A 309-amino-acid chain; its full sequence is Glutaminase (309 aa).

Positions 64, 114, 160, 167, 191, 243, and 261 each coordinate substrate.

This sequence belongs to the glutaminase family. Homotetramer.

It carries out the reaction L-glutamine + H2O = L-glutamate + NH4(+). This is Glutaminase from Methylobacterium radiotolerans (strain ATCC 27329 / DSM 1819 / JCM 2831 / NBRC 15690 / NCIMB 10815 / 0-1).